Reading from the N-terminus, the 82-residue chain is Large ribosomal subunit protein eL14 (82 aa).

The protein belongs to the eukaryotic ribosomal protein eL14 family.

This chain is Large ribosomal subunit protein eL14, found in Pyrococcus abyssi (strain GE5 / Orsay).